The following is a 340-amino-acid chain: Phosphoribosylformylglycinamidine cyclo-ligase (340 aa).

It belongs to the AIR synthase family.

The protein resides in the cytoplasm. It carries out the reaction 2-formamido-N(1)-(5-O-phospho-beta-D-ribosyl)acetamidine + ATP = 5-amino-1-(5-phospho-beta-D-ribosyl)imidazole + ADP + phosphate + H(+). It participates in purine metabolism; IMP biosynthesis via de novo pathway; 5-amino-1-(5-phospho-D-ribosyl)imidazole from N(2)-formyl-N(1)-(5-phospho-D-ribosyl)glycinamide: step 2/2. The sequence is that of Phosphoribosylformylglycinamidine cyclo-ligase from Streptococcus sanguinis (strain SK36).